Here is a 92-residue protein sequence, read N- to C-terminus: Small ribosomal subunit protein uS19 (92 aa).

It belongs to the universal ribosomal protein uS19 family.

Its function is as follows. Protein S19 forms a complex with S13 that binds strongly to the 16S ribosomal RNA. The polypeptide is Small ribosomal subunit protein uS19 (Chelativorans sp. (strain BNC1)).